Reading from the N-terminus, the 141-residue chain is Protein Turandot Z (141 aa).

Positions 1 to 23 are cleaved as a signal peptide; sequence MYFAIRLSFVLAVLFCLTGNGNA.

Belongs to the Turandot family.

Its subcellular location is the secreted. A humoral factor that may play a role in stress tolerance. In Drosophila yakuba (Fruit fly), this protein is Protein Turandot Z.